A 251-amino-acid chain; its full sequence is uncharacterized protein (251 aa).

36–43 (GKQGTGKT) contributes to the ATP binding site. Positions 230–251 (SDNKTENPSNPSLLTKIDDVTR) are disordered.

In terms of biological role, this protein may be involved in virus assembly. Essential for virus function. This is an uncharacterized protein from Sulfolobus spindle-shape virus 1 (SSV1).